Consider the following 317-residue polypeptide: Carbonic anhydrase 5B, mitochondrial (317 aa).

Residues 1 to 33 (MVVMNSLRVILQASPGKLLWRKFQIPRFMPARP) constitute a mitochondrion transit peptide. In terms of domain architecture, Alpha-carbonic anhydrase spans 37-296 (YTCTYKTRNR…LMNRTVRSSF (260 aa)). Positions 130, 132, and 155 each coordinate Zn(2+). 235–236 (TT) lines the substrate pocket.

This sequence belongs to the alpha-carbonic anhydrase family. Zn(2+) is required as a cofactor. Strongest expression in heart, pancreas, kidney, placenta, lung, and skeletal muscle. Not expressed in liver.

The protein localises to the mitochondrion. The catalysed reaction is hydrogencarbonate + H(+) = CO2 + H2O. Its activity is regulated as follows. Inhibited by coumarins, sulfonamide derivatives such as acetazolamide (AZA), saccharin and Foscarnet (phosphonoformate trisodium salt). Mitochondrial carbonic anhydrase that catalyzes the reversible conversion of carbon dioxide to bicarbonate/HCO3. The protein is Carbonic anhydrase 5B, mitochondrial (CA5B) of Homo sapiens (Human).